Reading from the N-terminus, the 293-residue chain is Ethanolamine ammonia-lyase small subunit (293 aa).

Residues Val-207 and Glu-228 each coordinate adenosylcob(III)alamin.

This sequence belongs to the EutC family. The basic unit is a heterodimer which dimerizes to form tetramers. The heterotetramers trimerize; 6 large subunits form a core ring with 6 small subunits projecting outwards. The cofactor is adenosylcob(III)alamin.

It is found in the bacterial microcompartment. It carries out the reaction ethanolamine = acetaldehyde + NH4(+). It functions in the pathway amine and polyamine degradation; ethanolamine degradation. Catalyzes the deamination of various vicinal amino-alcohols to oxo compounds. Allows this organism to utilize ethanolamine as the sole source of nitrogen and carbon in the presence of external vitamin B12. In Listeria monocytogenes serotype 4a (strain HCC23), this protein is Ethanolamine ammonia-lyase small subunit.